The primary structure comprises 732 residues: Polyadenylate-binding protein, cytoplasmic and nuclear (732 aa).

Positions 1–19 (MSAETSTTPAPAENTNGTP) are enriched in polar residues. The segment at 1–26 (MSAETSTTPAPAENTNGTPDNAPAPE) is disordered. RRM domains lie at 42-120 (ASLY…WSQR), 130-207 (GNVF…HHIS), 223-300 (TNIY…RAQK), and 326-454 (VNLY…LAQR). 2 disordered regions span residues 357-413 (VMRD…KKPL) and 706-732 (MKNK…ENKA). Over residues 371 to 412 (SETKESANKENEKAAEGEKEPAAEEKEKEEKKEAEQKPEKKP) the composition is skewed to basic and acidic residues. Residues 630-707 (VGVLTAQALS…ALSVYDEYMK (78 aa)) enclose the PABC domain.

It belongs to the polyadenylate-binding protein type-1 family.

It localises to the cytoplasm. It is found in the nucleus. Functionally, binds the poly(A) tail of mRNA. Appears to be an important mediator of the multiple roles of the poly(A) tail in mRNA biogenesis, stability and translation. In the nucleus, involved in both mRNA cleavage and polyadenylation. Is also required for efficient mRNA export to the cytoplasm. Acts in concert with a poly(A)-specific nuclease (PAN) to affect poly(A) tail shortening, which may occur concomitantly with either nucleocytoplasmic mRNA transport or translational initiation. In the cytoplasm, stimulates translation initiation and regulates mRNA decay through translation termination-coupled poly(A) shortening, probably mediated by PAN. The sequence is that of Polyadenylate-binding protein, cytoplasmic and nuclear (pab1) from Emericella nidulans (strain FGSC A4 / ATCC 38163 / CBS 112.46 / NRRL 194 / M139) (Aspergillus nidulans).